The sequence spans 60 residues: Large ribosomal subunit protein uL30 (60 aa).

Belongs to the universal ribosomal protein uL30 family. As to quaternary structure, part of the 50S ribosomal subunit.

The sequence is that of Large ribosomal subunit protein uL30 from Lysinibacillus sphaericus (strain C3-41).